Here is a 167-residue protein sequence, read N- to C-terminus: CASP-like protein 3 (167 aa).

The Cytoplasmic portion of the chain corresponds to 1-2 (MK). The chain crosses the membrane as a helical span at residues 3-23 (IIAIAPRIGAAVLSLVAFSVM). The Extracellular segment spans residues 24-48 (ASTGERRSGAGSTFKVKFSDFQAYN). Residues 49 to 69 (YLIALNVILFVYSTVQLVMLV) traverse the membrane as a helical segment. Residues 70–80 (NSNHNSSFSSP) lie on the Cytoplasmic side of the membrane. Residues 81–101 (FKWVLGVYICDQLLAFLLFSA) traverse the membrane as a helical segment. Topologically, residues 102–137 (SSSAATASELSRHGLHNIWPPACATWKLWTFCSKAE) are extracellular. The chain crosses the membrane as a helical span at residues 138–158 (AAVAMSFLSSFFIITSSILSG). At 159 to 167 (YHLSKVPAV) the chain is on the cytoplasmic side.

It belongs to the Casparian strip membrane proteins (CASP) family. In terms of assembly, homodimer and heterodimers.

The protein resides in the cell membrane. This is CASP-like protein 3 from Osmunda lancea (Fern).